Here is an 89-residue protein sequence, read N- to C-terminus: Small ribosomal subunit protein uS15 (89 aa).

It belongs to the universal ribosomal protein uS15 family. In terms of assembly, part of the 30S ribosomal subunit. Forms a bridge to the 50S subunit in the 70S ribosome, contacting the 23S rRNA.

Functionally, one of the primary rRNA binding proteins, it binds directly to 16S rRNA where it helps nucleate assembly of the platform of the 30S subunit by binding and bridging several RNA helices of the 16S rRNA. Its function is as follows. Forms an intersubunit bridge (bridge B4) with the 23S rRNA of the 50S subunit in the ribosome. This is Small ribosomal subunit protein uS15 from Bartonella tribocorum (strain CIP 105476 / IBS 506).